Here is a 562-residue protein sequence, read N- to C-terminus: Probable E3 ubiquitin-protein ligase ARI7 (562 aa).

The disordered stretch occupies residues 1–39 (MDSEEDMLDAHDMESGEDDFYSGGTDDCNDSDDGEPDYG). The segment covering 27–39 (DCNDSDDGEPDYG) has biased composition (acidic residues). The segment at 133–346 (SELTCGICFD…GGFYACNRYE (214 aa)) is TRIAD supradomain. Residues Cys-137, Cys-140, Cys-154, His-156, Cys-159, Cys-162, Cys-182, Cys-187, Cys-226, Cys-231, Cys-248, Cys-250, Cys-255, Cys-258, His-263, Cys-268, Cys-295, and Cys-298 each coordinate Zn(2+). An RING-type 1 zinc finger spans residues 137–187 (CGICFDSYPPEKIASVSCGHPFCTTCWTGYISTTINDGPGCLMLRCPDPSC). The segment at 206-268 (EKYNRYFLRS…TEEAHRPVDC (63 aa)) adopts an IBR-type zinc-finger fold. The RING-type 2; atypical zinc-finger motif lies at 295-325 (CPRCKRPIEKNQGCMHMTCTPPCKYEFCWLC). Cys-308 is a catalytic residue. The Zn(2+) site is built by Cys-313, Cys-317, Cys-322, Cys-325, His-332, and Cys-342. The tract at residues 524-562 (ACSSKSTSSKSTGCSSKTRGKGKGSSRTGGSSRNPDDNL) is disordered. The segment covering 525–540 (CSSKSTSSKSTGCSSK) has biased composition (low complexity).

The protein belongs to the RBR family. Ariadne subfamily. The cofactor is Zn(2+). In terms of tissue distribution, ubiquitous.

It carries out the reaction [E2 ubiquitin-conjugating enzyme]-S-ubiquitinyl-L-cysteine + [acceptor protein]-L-lysine = [E2 ubiquitin-conjugating enzyme]-L-cysteine + [acceptor protein]-N(6)-ubiquitinyl-L-lysine.. The protein operates within protein modification; protein ubiquitination. Might act as an E3 ubiquitin-protein ligase, or as part of E3 complex, which accepts ubiquitin from specific E2 ubiquitin-conjugating enzymes and then transfers it to substrates. The protein is Probable E3 ubiquitin-protein ligase ARI7 (ARI7) of Arabidopsis thaliana (Mouse-ear cress).